Here is a 427-residue protein sequence, read N- to C-terminus: ETS domain-containing protein Elk-1 (427 aa).

Residues V5–V86 constitute a DNA-binding region (ETS). Disordered regions lie at residues A116–R146, L166–P202, and P226–P252. Residues K229, K248, and K253 each participate in a glycyl lysine isopeptide (Lys-Gly) (interchain with G-Cter in SUMO) cross-link. Polar residues predominate over residues S300–Q310. The interval S300–A350 is disordered. Position 323 is a phosphoserine; by MAPK1 (S323). Residues T335, T352, T362, and T367 each carry the phosphothreonine; by MAPK1 modification. The segment at G348–S398 is sufficient for interaction with MAD2L2. The O-linked (GlcNAc) threonine glycan is linked to T380. Residue S382 is modified to Phosphoserine; by MAPK1 and MAPK8. Position 388 is a phosphoserine; by MAPK1 (S388). At T416 the chain carries Phosphothreonine; by MAPK1. A Phosphoserine; by MAPK1 modification is found at S421.

This sequence belongs to the ETS family. In terms of assembly, interacts in its sumoylated form with PIAS2/PIASX which enhances its transcriptional activator activity. Interacts with MAD2L2; the interaction is direct and promotes phosphorylation by the kinases MAPK8 and/or MAPK9. Interacts with POU1F1. Sumoylation represses transcriptional activator activity as it results in recruitment of HDAC2 to target gene promoters which leads to decreased histone acetylation and reduced transactivator activity. It also regulates nuclear retention. Post-translationally, on mitogenic stimulation, phosphorylated on C-terminal serine and threonine residues by MAPK1. Ser-382 and Ser-388 are the preferred sites for MAPK1. In vitro, phosphorylation by MAPK1 potentiates ternary complex formation with the serum responses factors, SRE and SRF. Also phosphorylated on Ser-382 by MAPK8 and/or MAKP9. Phosphorylation leads to loss of sumoylation and restores transcriptional activator activity. Phosphorylated and activated by CAMK4, MAPK11, MAPK12 and MAPK14. Upon bFGF stimulus, phosphorylated by PAK1. Phosphorylated by PRP4K at Thr-416; phosphorylation activation ELK1 transcriptional activity.

The protein resides in the nucleus. In terms of biological role, transcription factor that binds to purine-rich DNA sequences. Forms a ternary complex with SRF and the ETS and SRF motifs of the serum response element (SRE) on the promoter region of immediate early genes such as FOS and IER2. Induces target gene transcription upon JNK and MAPK-signaling pathways stimulation. In Rattus norvegicus (Rat), this protein is ETS domain-containing protein Elk-1.